Here is a 371-residue protein sequence, read N- to C-terminus: Peptidyl-prolyl cis-trans isomerase D (371 aa).

The PPIase cyclophilin-type domain maps to 8-172 (FFDIAIGGQL…EPVVIADCGQ (165 aa)). The tract at residues 175–202 (SDDPFLAERTSTDGDPYEDYPDDEDQEL) is disordered. Residues 189 to 201 (DPYEDYPDDEDQE) are compositionally biased toward acidic residues. TPR repeat units lie at residues 212–245 (AKTI…LDVH), 265–303 (APLL…LELS), and 308–341 (AKAY…LPED).

This sequence belongs to the cyclophilin-type PPIase family. PPIase D subfamily.

Its subcellular location is the cytoplasm. The catalysed reaction is [protein]-peptidylproline (omega=180) = [protein]-peptidylproline (omega=0). In terms of biological role, PPIases accelerate the folding of proteins. It catalyzes the cis-trans isomerization of proline imidic peptide bonds in oligopeptides. This is Peptidyl-prolyl cis-trans isomerase D (Cyp40) from Amanita muscaria (Fly agaric).